The sequence spans 474 residues: MAKDALIVKTTPLPQSRISFELEIPSETCKTCVNETINSISRSAKIPGFRLGKIPKQVLIQRIGITQLHASALEKIIDKSWQEALKIKSIEPLSEPELVDGFESLLAKFSPEKSLKVTLQTDVAPELKLKKSKGLSVEISKTKFDPKSIDEALEKSRNQFANIIPVTNRAAKLGDIAVVSFKGKYKDSGKEIDGGTSESMDLELEKNKMIPGFVEGIVKMKIGDTKTLNLKFPDDYSHEDSRGKEAIFEVNLKDLKEKELPELNDDFAKQSGNKESLKELKKDIEKQLKDNFEKTQKDIKIEALLDALTNELVAEIPKSMIDIEVRNNIEQTAQRFAQQGLDVKSTFTPELVKSLADSTRPQAEKNVQRNLALKALAETENIKVEQDEIDSKMKDYEDAISQSSKQIDIKKLTEVLTNDLLKEKLIIWLEENSEVKEKTTKTSKATKTSKTTKATKTASKTTKTTKTQNKKEKK.

In terms of domain architecture, PPIase FKBP-type spans 174–261 (GDIAVVSFKG…LKDLKEKELP (88 aa)). The segment at 435–474 (VKEKTTKTSKATKTSKTTKATKTASKTTKTTKTQNKKEKK) is disordered. A compositionally biased stretch (low complexity) spans 442–467 (TSKATKTSKTTKATKTASKTTKTTKT).

This sequence belongs to the FKBP-type PPIase family. Tig subfamily.

The protein resides in the cytoplasm. The enzyme catalyses [protein]-peptidylproline (omega=180) = [protein]-peptidylproline (omega=0). In terms of biological role, involved in protein export. Acts as a chaperone by maintaining the newly synthesized protein in an open conformation. Functions as a peptidyl-prolyl cis-trans isomerase. This is Trigger factor from Prochlorococcus marinus (strain AS9601).